The chain runs to 328 residues: Nucleotide-binding protein BLD_0430 (328 aa).

The interval 1–35 (MNQQTTNRDTGEAAATNAPANSATSTSTPDNQPTP) is disordered. Residues 13–29 (AAATNAPANSATSTSTP) are compositionally biased toward low complexity. Residue 46–53 (GMSGAGRS) coordinates ATP. 101 to 104 (DVRS) contributes to the GTP binding site.

This sequence belongs to the RapZ-like family.

Displays ATPase and GTPase activities. The polypeptide is Nucleotide-binding protein BLD_0430 (Bifidobacterium longum (strain DJO10A)).